The following is a 105-amino-acid chain: Large ribosomal subunit protein uL24 (105 aa).

This sequence belongs to the universal ribosomal protein uL24 family. As to quaternary structure, part of the 50S ribosomal subunit.

Its function is as follows. One of two assembly initiator proteins, it binds directly to the 5'-end of the 23S rRNA, where it nucleates assembly of the 50S subunit. In terms of biological role, one of the proteins that surrounds the polypeptide exit tunnel on the outside of the subunit. The chain is Large ribosomal subunit protein uL24 from Mycobacterium tuberculosis (strain CDC 1551 / Oshkosh).